We begin with the raw amino-acid sequence, 246 residues long: Large ribosomal subunit protein uL3 (246 aa).

Disordered stretches follow at residues 140–162 (SHRS…NKKM) and 215–246 (DVPL…EENA). Gln151 bears the N5-methylglutamine mark. Over residues 234-246 (EAAPEAPASEENA) the composition is skewed to low complexity.

The protein belongs to the universal ribosomal protein uL3 family. Part of the 50S ribosomal subunit. Forms a cluster with proteins L14 and L19. In terms of processing, methylated by PrmB.

Functionally, one of the primary rRNA binding proteins, it binds directly near the 3'-end of the 23S rRNA, where it nucleates assembly of the 50S subunit. This Methylorubrum extorquens (strain PA1) (Methylobacterium extorquens) protein is Large ribosomal subunit protein uL3.